Here is a 382-residue protein sequence, read N- to C-terminus: Kelch domain-containing protein 3 (382 aa).

Kelch repeat units lie at residues 25-77 (RVYS…PYMR), 88-138 (TVFL…VLGK), 139-189 (IMYI…TMLG), 191-249 (HMYV…GYNG), and 251-301 (LYIF…IVGD).

Component of a CRL2(KLHDC3) complex, also named ECS(KLHDC3) complex, composed of CUL2, Elongin BC (ELOB and ELOC), RBX1 and substrate-specific adapter KLHDC3. May form oligomers as a KLHDC3-ELOB-ELOC complex; this interaction is likely autoinhibitory for the E3 ligase complex. Expressed specifically in testis, particularly in pachytene spermatocytes.

Its subcellular location is the cytoplasm. Its pathway is protein modification; protein ubiquitination. Substrate-recognition component of a Cul2-RING (CRL2) E3 ubiquitin-protein ligase complex of the DesCEND (destruction via C-end degrons) pathway, which recognizes a C-degron located at the extreme C terminus of target proteins, leading to their ubiquitination and degradation. The C-degron recognized by the DesCEND pathway is usually a motif of less than ten residues and can be present in full-length proteins, truncated proteins or proteolytically cleaved forms. The CRL2(KLHDC3) complex specifically recognizes proteins with a glycine (Gly) at the C-terminus, leading to their ubiquitination and degradation: recognizes the C-terminal -Arg-(Xaa)n-Arg-Gly, -Arg-(Xaa)n-Lys-Gly, and -Arg-(Xaa)n-Gln-Gly degrons. The CRL2(KLHDC3) complex mediates ubiquitination and degradation of truncated SELENOV and SEPHS2 selenoproteins produced by failed UGA/Sec decoding, which end with a glycine. May be involved in meiotic recombination process. The sequence is that of Kelch domain-containing protein 3 from Mus musculus (Mouse).